The following is a 342-amino-acid chain: Methionine import ATP-binding protein MetN (342 aa).

One can recognise an ABC transporter domain in the interval 2 to 241 (ITLEQVTKIY…PQQPITKRFV (240 aa)). Residue 38–45 (GYSGAGKS) coordinates ATP.

The protein belongs to the ABC transporter superfamily. Methionine importer (TC 3.A.1.24) family. In terms of assembly, the complex is composed of two ATP-binding proteins (MetN), two transmembrane proteins (MetI) and a solute-binding protein (MetQ).

Its subcellular location is the cell membrane. The catalysed reaction is L-methionine(out) + ATP + H2O = L-methionine(in) + ADP + phosphate + H(+). It catalyses the reaction D-methionine(out) + ATP + H2O = D-methionine(in) + ADP + phosphate + H(+). In terms of biological role, part of the ABC transporter complex MetNIQ involved in methionine import. Responsible for energy coupling to the transport system. The chain is Methionine import ATP-binding protein MetN from Geobacillus kaustophilus (strain HTA426).